Consider the following 329-residue polypeptide: Vanillate O-demethylase oxygenase subunit (329 aa).

One can recognise a Rieske domain in the interval 1–84 (MICNERMVIY…AQERHGFIWV (84 aa)). 4 residues coordinate [2Fe-2S] cluster: Cys24, His26, Cys43, and His46.

It belongs to the bacterial ring-hydroxylating dioxygenase alpha subunit family. In terms of assembly, this demethylase system consists of two proteins: an oxygenase and an oxygenase reductase. [2Fe-2S] cluster serves as cofactor. Requires Fe cation as cofactor.

It carries out the reaction vanillate + NADH + O2 + H(+) = 3,4-dihydroxybenzoate + formaldehyde + NAD(+) + H2O. Its pathway is xenobiotic degradation; vanillyl-alcohol degradation. This Pseudomonas sp. (strain ATCC 19151) protein is Vanillate O-demethylase oxygenase subunit (vanA).